Here is a 147-residue protein sequence, read N- to C-terminus: UPF0260 protein Ent638_2368 (147 aa).

The protein belongs to the UPF0260 family.

The sequence is that of UPF0260 protein Ent638_2368 from Enterobacter sp. (strain 638).